Here is a 119-residue protein sequence, read N- to C-terminus: RNA guanine-N7 methyltransferase activating subunit (119 aa).

The segment at 1–55 (MSDTSEEIPNFEEMFASRFTKDDKEYQEYLKRPPESPPIVEEWNSRAGGNQRNRG) is interaction with RNMT. Positions 30–119 (LKRPPESPPI…HNQRPPYGYY (90 aa)) are disordered. S36 carries the post-translational modification Phosphoserine. The short motif at 36–42 (SPPIVEE) is the RNMT-activating domain element. Residues 47–61 (AGGNQRNRGNWLQDN) show a composition bias toward polar residues. Residues 56–119 (NWLQDNRQFR…HNQRPPYGYY (64 aa)) form an RNA-binding region. Over residues 62–73 (RQFRGRDNRRGW) the composition is skewed to basic and acidic residues. R85 bears the Omega-N-methylarginine mark. S86 carries the phosphoserine modification. Over residues 89-112 (NNNYPQQRPEPYYQQQYTQYGHNQ) the composition is skewed to low complexity.

This sequence belongs to the RAM family. As to quaternary structure, interacts with RNMT; this interaction enhances mRNA binding and cap methyltransferase activity.

The protein localises to the nucleus. In terms of biological role, regulatory subunit of the mRNA-capping methyltransferase RNMT:RAMAC complex that methylates the N7 position of the added guanosine to the 5'-cap structure of mRNAs. Promotes the recruitment of the methyl donor, S-adenosyl-L-methionine, to RNMT. Regulates RNMT expression by a post-transcriptional stabilizing mechanism. Binds RNA. The sequence is that of RNA guanine-N7 methyltransferase activating subunit (Ramac) from Mus musculus (Mouse).